The primary structure comprises 173 residues: Sterile alpha motif domain-containing protein 5 (173 aa).

Residues 1–65 enclose the SAM domain; the sequence is MCTNIVYEWL…LEAVRRLREQ (65 aa). Residues 75–119 are disordered; sequence TLEPQPAPPGPPADAVPTGRRGEPCGGPAQGTRGDSRGHTTAPRS. Residues 79-88 are compositionally biased toward pro residues; sequence QPAPPGPPAD.

Interacts promiscuously (via SAM domain) with EPHA5, EPHA6, EPHA7, EPHA8, EPHB1, EPHB2, EPHB3 and EPHB4 (via SAM domain) (in vitro). In terms of tissue distribution, detected in biliary epithelial cells on bile ducts at the hepatic hilum (at protein level).

It is found in the cytoplasm. This chain is Sterile alpha motif domain-containing protein 5 (SAMD5), found in Homo sapiens (Human).